Here is a 560-residue protein sequence, read N- to C-terminus: Membrane protein insertase YidC (560 aa).

The chain crosses the membrane as a helical span at residues methionine 1–leucine 21. Residues valine 42–alanine 66 form a disordered region. Transmembrane regions (helical) follow at residues leucine 341–leucine 361, leucine 367–phenylalanine 387, leucine 437–leucine 457, tryptophan 468–methionine 488, and proline 515–valine 535.

This sequence belongs to the OXA1/ALB3/YidC family. Type 1 subfamily. In terms of assembly, interacts with the Sec translocase complex via SecD. Specifically interacts with transmembrane segments of nascent integral membrane proteins during membrane integration.

Its subcellular location is the cell inner membrane. Its function is as follows. Required for the insertion and/or proper folding and/or complex formation of integral membrane proteins into the membrane. Involved in integration of membrane proteins that insert both dependently and independently of the Sec translocase complex, as well as at least some lipoproteins. Aids folding of multispanning membrane proteins. This chain is Membrane protein insertase YidC, found in Pseudomonas putida (strain ATCC 700007 / DSM 6899 / JCM 31910 / BCRC 17059 / LMG 24140 / F1).